Consider the following 180-residue polypeptide: Cytochrome b6-f complex iron-sulfur subunit 2 (180 aa).

A helical transmembrane segment spans residues 21 to 43 (LLTFGTITGVAAGALYPAVKYLI). Residues 66–162 (VTEFLASHNA…ATVTDDDKLV (97 aa)) enclose the Rieske domain. [2Fe-2S] cluster is bound by residues C108, H110, C126, and H129. A disulfide bond links C113 and C128.

This sequence belongs to the Rieske iron-sulfur protein family. As to quaternary structure, the 4 large subunits of the cytochrome b6-f complex are cytochrome b6, subunit IV (17 kDa polypeptide, PetD), cytochrome f and the Rieske protein, while the 4 small subunits are PetG, PetL, PetM and PetN. The complex functions as a dimer. Requires [2Fe-2S] cluster as cofactor.

Its subcellular location is the cellular thylakoid membrane. The catalysed reaction is 2 oxidized [plastocyanin] + a plastoquinol + 2 H(+)(in) = 2 reduced [plastocyanin] + a plastoquinone + 4 H(+)(out). Functionally, component of the cytochrome b6-f complex, which mediates electron transfer between photosystem II (PSII) and photosystem I (PSI), cyclic electron flow around PSI, and state transitions. The polypeptide is Cytochrome b6-f complex iron-sulfur subunit 2 (Synechocystis sp. (strain ATCC 27184 / PCC 6803 / Kazusa)).